A 227-amino-acid chain; its full sequence is Endo-1,4-beta-xylanase 1 (227 aa).

The signal sequence occupies residues 1 to 19 (MVSLKSVLAAATAVSSAIA). The GH11 domain occupies 37-225 (QVTPNAEGWH…SSGESDIYVQ (189 aa)). The active-site Nucleophile is the Glu-121. Glu-212 acts as the Proton donor in catalysis.

It belongs to the glycosyl hydrolase 11 (cellulase G) family.

The catalysed reaction is Endohydrolysis of (1-&gt;4)-beta-D-xylosidic linkages in xylans.. It participates in glycan degradation; xylan degradation. This chain is Endo-1,4-beta-xylanase 1, found in Humicola insolens (Soft-rot fungus).